Reading from the N-terminus, the 293-residue chain is Elongation factor Ts (293 aa).

The segment at 80–83 is involved in Mg(2+) ion dislocation from EF-Tu; the sequence is TDFV.

It belongs to the EF-Ts family.

Its subcellular location is the cytoplasm. Associates with the EF-Tu.GDP complex and induces the exchange of GDP to GTP. It remains bound to the aminoacyl-tRNA.EF-Tu.GTP complex up to the GTP hydrolysis stage on the ribosome. The sequence is that of Elongation factor Ts from Burkholderia cenocepacia (strain ATCC BAA-245 / DSM 16553 / LMG 16656 / NCTC 13227 / J2315 / CF5610) (Burkholderia cepacia (strain J2315)).